The chain runs to 343 residues: Biotin synthase (343 aa).

A Radical SAM core domain is found at 36–254; sequence NTIQISTLLS…IAVARIMMPK (219 aa). Residues cysteine 51, cysteine 55, and cysteine 58 each coordinate [4Fe-4S] cluster. Residues cysteine 95, cysteine 126, cysteine 186, and arginine 258 each contribute to the [2Fe-2S] cluster site.

This sequence belongs to the radical SAM superfamily. Biotin synthase family. Homodimer. It depends on [4Fe-4S] cluster as a cofactor. The cofactor is [2Fe-2S] cluster.

It catalyses the reaction (4R,5S)-dethiobiotin + (sulfur carrier)-SH + 2 reduced [2Fe-2S]-[ferredoxin] + 2 S-adenosyl-L-methionine = (sulfur carrier)-H + biotin + 2 5'-deoxyadenosine + 2 L-methionine + 2 oxidized [2Fe-2S]-[ferredoxin]. The protein operates within cofactor biosynthesis; biotin biosynthesis; biotin from 7,8-diaminononanoate: step 2/2. In terms of biological role, catalyzes the conversion of dethiobiotin (DTB) to biotin by the insertion of a sulfur atom into dethiobiotin via a radical-based mechanism. In Buchnera aphidicola subsp. Acyrthosiphon pisum (strain APS) (Acyrthosiphon pisum symbiotic bacterium), this protein is Biotin synthase.